Here is a 33-residue protein sequence, read N- to C-terminus: Rugosin-A (33 aa).

A disulfide bridge connects residues Cys-27 and Cys-33.

The protein belongs to the frog skin active peptide (FSAP) family. Brevinin subfamily. In terms of tissue distribution, expressed by the skin glands.

Its subcellular location is the secreted. Functionally, has antibacterial activity against Gram-positive bacteria. The chain is Rugosin-A from Glandirana rugosa (Japanese wrinkled frog).